A 325-amino-acid chain; its full sequence is GMP reductase (325 aa).

Catalysis depends on Cys-174, which acts as the Thioimidate intermediate. 203–226 (LIADGGIRTHGDIAKSIRFGASMV) contributes to the NADP(+) binding site.

Belongs to the IMPDH/GMPR family. GuaC type 2 subfamily.

It carries out the reaction IMP + NH4(+) + NADP(+) = GMP + NADPH + 2 H(+). In terms of biological role, catalyzes the irreversible NADPH-dependent deamination of GMP to IMP. It functions in the conversion of nucleobase, nucleoside and nucleotide derivatives of G to A nucleotides, and in maintaining the intracellular balance of A and G nucleotides. This Staphylococcus aureus (strain bovine RF122 / ET3-1) protein is GMP reductase.